The primary structure comprises 1435 residues: DNA polymerase III PolC-type (1435 aa).

Positions 420–576 (YVVFDVETTG…YDTEATGYLL (157 aa)) constitute an Exonuclease domain.

This sequence belongs to the DNA polymerase type-C family. PolC subfamily.

It is found in the cytoplasm. The enzyme catalyses DNA(n) + a 2'-deoxyribonucleoside 5'-triphosphate = DNA(n+1) + diphosphate. Functionally, required for replicative DNA synthesis. This DNA polymerase also exhibits 3' to 5' exonuclease activity. The chain is DNA polymerase III PolC-type from Bacillus cereus (strain ATCC 14579 / DSM 31 / CCUG 7414 / JCM 2152 / NBRC 15305 / NCIMB 9373 / NCTC 2599 / NRRL B-3711).